Consider the following 329-residue polypeptide: Replication factor C small subunit (329 aa).

51–58 (GPPGTGKT) is a binding site for ATP.

It belongs to the activator 1 small subunits family. RfcS subfamily. Heteromultimer composed of small subunits (RfcS) and large subunits (RfcL).

Functionally, part of the RFC clamp loader complex which loads the PCNA sliding clamp onto DNA. This chain is Replication factor C small subunit, found in Staphylothermus marinus (strain ATCC 43588 / DSM 3639 / JCM 9404 / F1).